Here is a 321-residue protein sequence, read N- to C-terminus: Cytochrome c biogenesis protein CcsA (321 aa).

7 helical membrane-spanning segments follow: residues 17 to 37 (IISI…IVGL), 43 to 63 (KGMI…WIYS), 71 to 91 (LYES…VPKI), 143 to 163 (MLLS…LLVI), 225 to 245 (VISL…VWAN), 258 to 273 (ETWA…IYLH), and 286 to 306 (AIVA…VNLL).

The protein belongs to the CcmF/CycK/Ccl1/NrfE/CcsA family. As to quaternary structure, may interact with Ccs1.

The protein resides in the plastid. It is found in the chloroplast thylakoid membrane. In terms of biological role, required during biogenesis of c-type cytochromes (cytochrome c6 and cytochrome f) at the step of heme attachment. In Liriodendron tulipifera (Tuliptree), this protein is Cytochrome c biogenesis protein CcsA.